Here is a 274-residue protein sequence, read N- to C-terminus: 2,3,4,5-tetrahydropyridine-2,6-dicarboxylate N-succinyltransferase (274 aa).

Positions 104 and 141 each coordinate substrate.

Belongs to the transferase hexapeptide repeat family. Homotrimer.

The protein resides in the cytoplasm. The enzyme catalyses (S)-2,3,4,5-tetrahydrodipicolinate + succinyl-CoA + H2O = (S)-2-succinylamino-6-oxoheptanedioate + CoA. The protein operates within amino-acid biosynthesis; L-lysine biosynthesis via DAP pathway; LL-2,6-diaminopimelate from (S)-tetrahydrodipicolinate (succinylase route): step 1/3. This chain is 2,3,4,5-tetrahydropyridine-2,6-dicarboxylate N-succinyltransferase, found in Wigglesworthia glossinidia brevipalpis.